We begin with the raw amino-acid sequence, 264 residues long: Short chain dehydrogenase/reductase dmxR18 (264 aa).

The NADP(+) site is built by isoleucine 24, aspartate 70, asparagine 97, and arginine 130. Catalysis depends on proton donor residues serine 146 and serine 147. Tyrosine 161, lysine 165, and threonine 196 together coordinate NADP(+). Tyrosine 161 (proton acceptor) is an active-site residue. Catalysis depends on lysine 165, which acts as the Lowers pKa of active site Tyr.

Belongs to the short-chain dehydrogenases/reductases (SDR) family.

The catalysed reaction is 3,8,9,10-tetrahydroxy-6-methyl-1,4-dihydroanthracen-1-one + NADPH + H(+) = (3R)-3,8,9,10-tetrahydroxy-6-methyl-1,2,3,4-tetrahydroanthracen-1-one + NADP(+). Its pathway is secondary metabolite biosynthesis. Its function is as follows. Short chain dehydrogenase/reductase; part of the gene cluster that mediates the biosynthesis of the dimeric xanthones cryptosporioptides. The pathway begins with the synthesis of atrochrysone thioester by the polyketide synthase dmx-nrPKS. The atrochrysone carboxyl ACP thioesterase dmxR1 then breaks the thioester bond and releases the atrochrysone carboxylic acid from dmx-nrPKS. Atrochrysone carboxylic acid is decarboxylated by the decarboxylase dmxR15, and oxidized by the anthrone oxygenase dmxR16 to yield emodin. Emodin is then reduced to emodin hydroquinone by the oxidoreductase dmxR7. A-ring reduction by the short chain dehydrogenase dmxR18, dehydration by the scytalone dehydratase-like protein dmxR17 and probable spontaneous re-oxidation, results in overall deoxygenation to chrysophanol. Baeyer-Villiger oxidation by the Baeyer-Villiger monooxygenase (BVMO) dmxR6 then yields monodictylactone in equilibrium with monodictyphenone. In the case of the cryptosporioptides biosynthesis, monodictylactone is reduced at C-12 to an alcohol (by the short chain dehydrogenases dmxR12 or dmxR8) and hydroxylated at C-5 by dmxR9, yielding the electron-rich aromatic which could eliminate H(2)O to form the ortho-quinonemethide, followed by tautomerisation to paraquinone and complete the formal reduction to produce the 10-methylgroup. Conjugate addition of C-4a-OH to the resulting paraquinone by the monooxygenase dmxR10 then gives cyclohexadienone, which is then reduced at C-5 by the short chain dehydrogenase dmxR3 to give the dihydroxanthone. The 6,7-epoxide in the cryptosporioptides could be introduced by the cytochrome P450 monooxygenase dmxL3. The highly reducing PKS dmxL2 manufactures butyrate, which is further carboxylated by dmxL1 to form ethylmalonate. It is not yet clear whether the carboxylation occurs while the butyrate is attached to the ACP of dmxL2, but this unusual fungal metabolite could then be esterified to O-5 by the O-acetyltransferase dmxR13. Finally, dimerization performed by dmxR5 gives the observed dimers cryptosporioptides A, B and C as the final products of the pathway. This Cryptosporiopsis sp. (strain 8999) protein is Short chain dehydrogenase/reductase dmxR18.